Here is a 299-residue protein sequence, read N- to C-terminus: MPNTQRLRIAIQKSGRLSKESQQLLKSCGVKFTVNEQRLIAHADNMPIDLLRVRDDDIPGLVMDGVVDLGIIGENVLEEEQIERQTLNKPSTFIKLRELDFGSCRLSLAVPNEFDYQDVSSLSGLRIATSYPNLLRRFMAEKGISYSDCMLKGSVEVAPRAGLSDAICDLVSTGATLEANGLYETEVIYRSTACIIQSNEAQTAEKQVLINKILSRANGVIRARESKYILLHAPTETLEQIIALLPGAENPTVLPLNDDTNRVAIHAVSTEDLFWDTMEQLTALGASSILVMPIEKMMG.

It belongs to the ATP phosphoribosyltransferase family. Long subfamily. Mg(2+) serves as cofactor.

Its subcellular location is the cytoplasm. It catalyses the reaction 1-(5-phospho-beta-D-ribosyl)-ATP + diphosphate = 5-phospho-alpha-D-ribose 1-diphosphate + ATP. It functions in the pathway amino-acid biosynthesis; L-histidine biosynthesis; L-histidine from 5-phospho-alpha-D-ribose 1-diphosphate: step 1/9. Feedback inhibited by histidine. Its function is as follows. Catalyzes the condensation of ATP and 5-phosphoribose 1-diphosphate to form N'-(5'-phosphoribosyl)-ATP (PR-ATP). Has a crucial role in the pathway because the rate of histidine biosynthesis seems to be controlled primarily by regulation of HisG enzymatic activity. This chain is ATP phosphoribosyltransferase, found in Shewanella denitrificans (strain OS217 / ATCC BAA-1090 / DSM 15013).